We begin with the raw amino-acid sequence, 325 residues long: Beta-ketoacyl-[acyl-carrier-protein] synthase III (325 aa).

Residues Cys116 and His252 contribute to the active site. The segment at Gln253–Arg257 is ACP-binding. Asn282 is an active-site residue.

This sequence belongs to the thiolase-like superfamily. FabH family. Homodimer.

The protein localises to the cytoplasm. The enzyme catalyses malonyl-[ACP] + acetyl-CoA + H(+) = 3-oxobutanoyl-[ACP] + CO2 + CoA. Its pathway is lipid metabolism; fatty acid biosynthesis. Catalyzes the condensation reaction of fatty acid synthesis by the addition to an acyl acceptor of two carbons from malonyl-ACP. Catalyzes the first condensation reaction which initiates fatty acid synthesis and may therefore play a role in governing the total rate of fatty acid production. Possesses both acetoacetyl-ACP synthase and acetyl transacylase activities. Its substrate specificity determines the biosynthesis of branched-chain and/or straight-chain of fatty acids. This chain is Beta-ketoacyl-[acyl-carrier-protein] synthase III, found in Xanthomonas campestris pv. campestris (strain ATCC 33913 / DSM 3586 / NCPPB 528 / LMG 568 / P 25).